The primary structure comprises 495 residues: Protein YhjJ (495 aa).

The N-terminal stretch at 1–24 is a signal peptide; it reads MQGTKIRLLAGSLLMLASAGYVQA.

The protein belongs to the peptidase M16 family.

The protein resides in the periplasm. The chain is Protein YhjJ (yhjJ) from Salmonella typhi.